Consider the following 928-residue polypeptide: DNA-binding protein RFX6 (928 aa).

Disordered stretches follow at residues 1-20 (MAKVPELEDTFLQAQPAPQL) and 50-98 (EGQP…SKTK). Positions 124 to 199 (TLQWLEENYI…YHYYGIGIKE (76 aa)) form a DNA-binding region, RFX-type winged-helix.

The protein belongs to the RFX family. In terms of assembly, interacts with RFX3. As to expression, expressed in pancreas. Expressed in pancreatic beta-cells (insulin-positive cells) and alpha-cells (glucagon-positive cells) (at protein level). Specifically expressed in pancreas, small intestine and colon. Expressed in endocrine cells in the islets.

The protein localises to the nucleus. Its function is as follows. Transcription factor required to direct islet cell differentiation during endocrine pancreas development. Specifically required for the differentiation of 4 of the 5 islet cell types and for the production of insulin. Not required for pancreatic PP (polypeptide-producing) cells differentiation. Acts downstream of NEUROG3 and regulates the transcription factors involved in beta-cell maturation and function, thereby restricting the expression of the beta-cell differentiation and specification genes, and thus the beta-cell fate choice. Activates transcription by forming a heterodimer with RFX3 and binding to the X-box in the promoter of target genes. Involved in glucose-stimulated insulin secretion by promoting insulin and L-type calcium channel gene transcription. This chain is DNA-binding protein RFX6 (RFX6), found in Homo sapiens (Human).